A 105-amino-acid polypeptide reads, in one-letter code: Large ribosomal subunit protein uL24 (105 aa).

Belongs to the universal ribosomal protein uL24 family. In terms of assembly, part of the 50S ribosomal subunit.

In terms of biological role, one of two assembly initiator proteins, it binds directly to the 5'-end of the 23S rRNA, where it nucleates assembly of the 50S subunit. Functionally, one of the proteins that surrounds the polypeptide exit tunnel on the outside of the subunit. This Xylella fastidiosa (strain 9a5c) protein is Large ribosomal subunit protein uL24.